The primary structure comprises 97 residues: UPF0250 protein RSc0326 (97 aa).

Belongs to the UPF0250 family.

The sequence is that of UPF0250 protein RSc0326 from Ralstonia nicotianae (strain ATCC BAA-1114 / GMI1000) (Ralstonia solanacearum).